We begin with the raw amino-acid sequence, 270 residues long: Putative phosphoenolpyruvate synthase regulatory protein (270 aa).

150–157 (GVSRCGKT) contributes to the ADP binding site.

Belongs to the pyruvate, phosphate/water dikinase regulatory protein family. PSRP subfamily.

It carries out the reaction [pyruvate, water dikinase] + ADP = [pyruvate, water dikinase]-phosphate + AMP + H(+). The catalysed reaction is [pyruvate, water dikinase]-phosphate + phosphate + H(+) = [pyruvate, water dikinase] + diphosphate. In terms of biological role, bifunctional serine/threonine kinase and phosphorylase involved in the regulation of the phosphoenolpyruvate synthase (PEPS) by catalyzing its phosphorylation/dephosphorylation. The chain is Putative phosphoenolpyruvate synthase regulatory protein from Aeromonas hydrophila subsp. hydrophila (strain ATCC 7966 / DSM 30187 / BCRC 13018 / CCUG 14551 / JCM 1027 / KCTC 2358 / NCIMB 9240 / NCTC 8049).